Consider the following 638-residue polypeptide: Glucans biosynthesis glucosyltransferase H (638 aa).

A run of 6 helical transmembrane segments spans residues 60–82, 97–119, 415–437, 464–486, 499–521, and 578–600; these read FYLI…AVMW, FMFL…FCVV, IGHY…IPLV, LWIF…FALL, LRVL…VVMY, and LAMW…ALTS.

It belongs to the glycosyltransferase 2 family. OpgH subfamily.

The protein resides in the cell inner membrane. It functions in the pathway glycan metabolism; osmoregulated periplasmic glucan (OPG) biosynthesis. Involved in the biosynthesis of osmoregulated periplasmic glucans (OPGs). This is Glucans biosynthesis glucosyltransferase H from Xylella fastidiosa (strain 9a5c).